A 121-amino-acid polypeptide reads, in one-letter code: UPF0145 protein SGR_4080 (121 aa).

This sequence belongs to the UPF0145 family.

The protein is UPF0145 protein SGR_4080 of Streptomyces griseus subsp. griseus (strain JCM 4626 / CBS 651.72 / NBRC 13350 / KCC S-0626 / ISP 5235).